The chain runs to 465 residues: ATP-dependent protease ATPase subunit HslU (465 aa).

ATP is bound by residues valine 20, 62 to 67, aspartate 277, glutamate 343, and arginine 415; that span reads GVGKTE.

Belongs to the ClpX chaperone family. HslU subfamily. As to quaternary structure, a double ring-shaped homohexamer of HslV is capped on each side by a ring-shaped HslU homohexamer. The assembly of the HslU/HslV complex is dependent on binding of ATP.

The protein localises to the cytoplasm. In terms of biological role, ATPase subunit of a proteasome-like degradation complex; this subunit has chaperone activity. The binding of ATP and its subsequent hydrolysis by HslU are essential for unfolding of protein substrates subsequently hydrolyzed by HslV. HslU recognizes the N-terminal part of its protein substrates and unfolds these before they are guided to HslV for hydrolysis. This is ATP-dependent protease ATPase subunit HslU from Geobacillus kaustophilus (strain HTA426).